The primary structure comprises 360 residues: Histidinol-phosphate aminotransferase 2 (360 aa).

Lys-218 bears the N6-(pyridoxal phosphate)lysine mark.

It belongs to the class-II pyridoxal-phosphate-dependent aminotransferase family. Histidinol-phosphate aminotransferase subfamily. As to quaternary structure, homodimer. Requires pyridoxal 5'-phosphate as cofactor.

It carries out the reaction L-histidinol phosphate + 2-oxoglutarate = 3-(imidazol-4-yl)-2-oxopropyl phosphate + L-glutamate. It functions in the pathway amino-acid biosynthesis; L-histidine biosynthesis; L-histidine from 5-phospho-alpha-D-ribose 1-diphosphate: step 7/9. The polypeptide is Histidinol-phosphate aminotransferase 2 (Nitrosococcus oceani (strain ATCC 19707 / BCRC 17464 / JCM 30415 / NCIMB 11848 / C-107)).